A 153-amino-acid chain; its full sequence is Gastric inhibitory polypeptide (153 aa).

A signal peptide spans 1–21 (MVATKTFALLLLSLFLAVGLG). 2 consecutive propeptides follow at residues 22 to 50 (EKKEGHFSALPSLPVGSHAKVSSPQPRGP) and 95 to 153 (EARA…LRSR). Residues 102–125 (ASQANRKEEEAVEPQSSPAKNPSD) are disordered.

It belongs to the glucagon family.

It localises to the secreted. Its function is as follows. Potent stimulator of insulin secretion and relatively poor inhibitor of gastric acid secretion. This is Gastric inhibitory polypeptide (GIP) from Homo sapiens (Human).